The sequence spans 274 residues: NAD kinase (274 aa).

Residue Asp-61 is the Proton acceptor of the active site. Residues 61–62 (DG), Lys-66, 134–135 (ND), Lys-145, Asp-164, and 175–180 (TAYSLS) contribute to the NAD(+) site.

The protein belongs to the NAD kinase family. A divalent metal cation is required as a cofactor.

It localises to the cytoplasm. It carries out the reaction NAD(+) + ATP = ADP + NADP(+) + H(+). In terms of biological role, involved in the regulation of the intracellular balance of NAD and NADP, and is a key enzyme in the biosynthesis of NADP. Catalyzes specifically the phosphorylation on 2'-hydroxyl of the adenosine moiety of NAD to yield NADP. This is NAD kinase from Clostridium tetani (strain Massachusetts / E88).